The primary structure comprises 224 residues: MTDSSWPTDERPRERLLAHGAQSLSDAELLAIFLRTGTTGMPVMALARHLIDEFSGLRGLMTASRRQFLQVKGLGTAKYAQVQAAMEMARRVMDEPLRQGDPLRSPADTRRFLTSRLGTYPHEVFAGLFLDNRHRVIQYRELFRGTIDGAAVYPREVVRQALEDNAAAVIFAHNHPSGVAEPSQADISLTRRLKEALGLVDIRVLDHMVIGHGEVISLAERGLM.

One can recognise an MPN domain in the interval 102-224; it reads PLRSPADTRR…VISLAERGLM (123 aa). Positions 173, 175, and 186 each coordinate Zn(2+). Residues 173-186 carry the JAMM motif motif; that stretch reads HNHPSGVAEPSQAD.

This sequence belongs to the UPF0758 family.

This Marinobacter nauticus (strain ATCC 700491 / DSM 11845 / VT8) (Marinobacter aquaeolei) protein is UPF0758 protein Maqu_3564.